Reading from the N-terminus, the 338-residue chain is Fe-S cluster assembly protein DRE2 (338 aa).

Residues 1–165 (MAKSGLLLIH…LPSFKKAANK (165 aa)) form an N-terminal SAM-like domain region. The tract at residues 166–232 (PLPTFKKKVE…DDLLNEEDAK (67 aa)) is linker. The interval 181–223 (VEARVHKAENDDDELEDEEDENLFDASRSKYFDEDDSESLDED) is disordered. Acidic residues-rich tracts occupy residues 190–203 (NDDD…DENL) and 213–223 (DEDDSESLDED). Residues Cys-242, Cys-253, Cys-256, and Cys-258 each coordinate [2Fe-2S] cluster. The segment at 242–258 (CGKSKTKKKKACKDCSC) is fe-S binding site A. [4Fe-4S] cluster-binding residues include Cys-301, Cys-304, Cys-312, and Cys-315. 2 short sequence motifs (cx2C motif) span residues 301 to 304 (CGSC) and 312 to 315 (CTGC). The interval 301-315 (CGSCSLGDAFRCTGC) is fe-S binding site B.

Belongs to the anamorsin family. As to quaternary structure, monomer. Interacts with TAH18. Interacts with MIA40. [2Fe-2S] cluster is required as a cofactor. It depends on [4Fe-4S] cluster as a cofactor.

The protein resides in the cytoplasm. The protein localises to the mitochondrion intermembrane space. Component of the cytosolic iron-sulfur (Fe-S) protein assembly (CIA) machinery required for the maturation of extramitochondrial Fe-S proteins. Part of an electron transfer chain functioning in an early step of cytosolic Fe-S biogenesis, facilitating the de novo assembly of a [4Fe-4S] cluster on the scaffold complex CFD1-NBP35. Electrons are transferred to DRE2 from NADPH via the FAD- and FMN-containing protein TAH18. TAH18-DRE2 are also required for the assembly of the diferric tyrosyl radical cofactor of ribonucleotide reductase (RNR), probably by providing electrons for reduction during radical cofactor maturation in the catalytic small subunit RNR2. This chain is Fe-S cluster assembly protein DRE2, found in Candida glabrata (strain ATCC 2001 / BCRC 20586 / JCM 3761 / NBRC 0622 / NRRL Y-65 / CBS 138) (Yeast).